Reading from the N-terminus, the 526-residue chain is Tyrosine 2,3-aminomutase (526 aa).

The Proton donor/acceptor role is filled by Tyr41. His71 is a substrate binding site. A cross-link (5-imidazolinone (Ala-Gly)) is located at residues 130–132 (ASG). At Ser131 the chain carries 2,3-didehydroalanine (Ser). Asn183 and Arg288 together coordinate substrate.

The protein belongs to the TAL/TAM family. In terms of assembly, homotetramer; dimer of dimers. Contains an active site 4-methylidene-imidazol-5-one (MIO), which is formed autocatalytically by cyclization and dehydration of residues Ala-Ser-Gly.

It catalyses the reaction L-tyrosine = 3-amino-3-(4-hydroxyphenyl)propanoate. It carries out the reaction L-tyrosine = (E)-4-coumarate + NH4(+). In terms of biological role, has aminomutase and, to a much lesser extent, ammonia-lyase activity. Primarily, catalyzes the rearrangement of L-tyrosine to S-beta-tyrosine, which is probably incorporated into secondary metabolite myxovalargin. The aminomutase activity exclusively produces S-beta-tyrosine. The chain is Tyrosine 2,3-aminomutase from Myxococcus sp. (strain Mx-B0).